Consider the following 123-residue polypeptide: Large ribosomal subunit protein bL12 (123 aa).

Belongs to the bacterial ribosomal protein bL12 family. Homodimer. Part of the ribosomal stalk of the 50S ribosomal subunit. Forms a multimeric L10(L12)X complex, where L10 forms an elongated spine to which 2 to 4 L12 dimers bind in a sequential fashion. Binds GTP-bound translation factors.

Forms part of the ribosomal stalk which helps the ribosome interact with GTP-bound translation factors. Is thus essential for accurate translation. In Bartonella tribocorum (strain CIP 105476 / IBS 506), this protein is Large ribosomal subunit protein bL12.